A 241-amino-acid polypeptide reads, in one-letter code: 1-(5-phosphoribosyl)-5-[(5-phosphoribosylamino)methylideneamino] imidazole-4-carboxamide isomerase (241 aa).

Catalysis depends on aspartate 10, which acts as the Proton acceptor. Residue aspartate 131 is the Proton donor of the active site.

The protein belongs to the HisA/HisF family.

It localises to the cytoplasm. The enzyme catalyses 1-(5-phospho-beta-D-ribosyl)-5-[(5-phospho-beta-D-ribosylamino)methylideneamino]imidazole-4-carboxamide = 5-[(5-phospho-1-deoxy-D-ribulos-1-ylimino)methylamino]-1-(5-phospho-beta-D-ribosyl)imidazole-4-carboxamide. It functions in the pathway amino-acid biosynthesis; L-histidine biosynthesis; L-histidine from 5-phospho-alpha-D-ribose 1-diphosphate: step 4/9. The polypeptide is 1-(5-phosphoribosyl)-5-[(5-phosphoribosylamino)methylideneamino] imidazole-4-carboxamide isomerase (Bifidobacterium longum subsp. infantis (strain ATCC 15697 / DSM 20088 / JCM 1222 / NCTC 11817 / S12)).